The chain runs to 509 residues: Transcription factor SOX-9 (509 aa).

Disordered regions lie at residues 1-66 (MNLL…ESEE) and 160-271 (RLRV…IDFR). A compositionally biased stretch (low complexity) spans 27–41 (SEGSRGSPCPSGSGS). A compositionally biased stretch (polar residues) spans 42 to 52 (DTENTRPQENT). Basic and acidic residues-rich tracts occupy residues 56–66 (GEPDLKKESEE) and 160–174 (RLRV…DYKY). Residues 63–103 (ESEEDKFPVCIREAVSQVLKGYDWTLVPMPVRVNGSSKNKP) are dimerization (DIM). A PQA region spans residues 63-103 (ESEEDKFPVCIREAVSQVLKGYDWTLVPMPVRVNGSSKNKP). The residue at position 64 (Ser64) is a Phosphoserine. Residues 105–173 (VKRPMNAFMV…QHKKDHPDYK (69 aa)) constitute a DNA-binding region (HMG box). Ser211 bears the Phosphoserine mark. Residues 224–307 (PGEHSGQSQG…LPPNGHPGVP (84 aa)) are transactivation domain (TAM). 2 consecutive short sequence motifs (9aaTAD) follow at residues 275–284 (IGELSSDVIS) and 290–298 (DVNEFDQYL). 2 disordered regions span residues 335–415 (WMSK…QHSP) and 420–439 (YSPF…TRSQ). Positions 341–359 (APPPPPHPPQQPPPVPQAP) are enriched in pro residues. Low complexity predominate over residues 360–369 (AQPQAALPQQ). The span at 380-415 (HTLTTLSSEPGQSQRTHIKTEQLSPSHYSEQQQHSP) shows a compositional bias: polar residues. A transactivation domain (TAC) region spans residues 394–509 (RTHIKTEQLS…QPVYTQLTRP (116 aa)). Lys398 is covalently cross-linked (Glycyl lysine isopeptide (Lys-Gly) (interchain with G-Cter in ubiquitin)). The 9aaTAD 3 motif lies at 460 to 468 (SVLYSTFTY). Positions 479–509 (PIADTSGVPSIPQTHSPQHWEQPVYTQLTRP) are disordered. Residues 485–509 (GVPSIPQTHSPQHWEQPVYTQLTRP) show a composition bias toward polar residues.

Homodimer; homodimerization is required for activity. Interacts (via C-terminus) with ZNF219; forming a complex that binds to the COL2A1 promoter and activates COL2A1 expression. Interacts with DDRGK1. Interacts with EP300/p300. Interacts with beta-catenin (CTNNB1); inhibiting CTNNB1 activity by competing with the binding sites of TCF/LEF within CTNNB1. Acetylated; acetylation impairs nuclear localization and ability to transactivate expression of target genes. Deacetylated by SIRT1. In terms of processing, phosphorylation at Ser-64 and Ser-211 by PKA increases transcriptional activity and may help delay chondrocyte maturation downstream of PTHLH/PTHrP signaling. Phosphorylation at either Ser-64 or Ser-211 is required for sumoylation, but phosphorylation is not dependent on sumoylation. Phosphorylated on tyrosine residues; tyrosine dephosphorylation by PTPN11/SHP2 blocks SOX9 phosphorylation by PKA and subsequent SUMOylation. Post-translationally, sumoylated; phosphorylation at either Ser-64 or Ser-211 is required for sumoylation. Sumoylation is induced by BMP signaling pathway. Ubiquitinated; ubiquitination leads to proteasomal degradation and is negatively regulated by DDRGK1.

The protein localises to the nucleus. Functionally, transcription factor that plays a key role in chondrocytes differentiation and skeletal development. Specifically binds the 5'-ACAAAG-3' DNA motif present in enhancers and super-enhancers and promotes expression of genes important for chondrogenesis, including cartilage matrix protein-coding genes COL2A1, COL4A2, COL9A1, COL11A2 and ACAN, SOX5 and SOX6. Also binds to some promoter regions. Plays a central role in successive steps of chondrocyte differentiation. Absolutely required for precartilaginous condensation, the first step in chondrogenesis during which skeletal progenitors differentiate into prechondrocytes. Together with SOX5 and SOX6, required for overt chondrogenesis when condensed prechondrocytes differentiate into early stage chondrocytes, the second step in chondrogenesis. Later, required to direct hypertrophic maturation and block osteoblast differentiation of growth plate chondrocytes: maintains chondrocyte columnar proliferation, delays prehypertrophy and then prevents osteoblastic differentiation of chondrocytes by lowering beta-catenin (CTNNB1) signaling and RUNX2 expression. Also required for chondrocyte hypertrophy, both indirectly, by keeping the lineage fate of chondrocytes, and directly, by remaining present in upper hypertrophic cells and transactivating COL10A1 along with MEF2C. Low lipid levels are the main nutritional determinant for chondrogenic commitment of skeletal progenitor cells: when lipids levels are low, FOXO (FOXO1 and FOXO3) transcription factors promote expression of SOX9, which induces chondrogenic commitment and suppresses fatty acid oxidation. Mechanistically, helps, but is not required, to remove epigenetic signatures of transcriptional repression and deposit active promoter and enhancer marks at chondrocyte-specific genes. Acts in cooperation with the Hedgehog pathway-dependent GLI (GLI1 and GLI3) transcription factors. In addition to cartilage development, also acts as a regulator of proliferation and differentiation in epithelial stem/progenitor cells: involved in the lung epithelium during branching morphogenesis, by balancing proliferation and differentiation and regulating the extracellular matrix. Controls epithelial branching during kidney development. The chain is Transcription factor SOX-9 (SOX9) from Sus scrofa (Pig).